Here is a 230-residue protein sequence, read N- to C-terminus: GTP cyclohydrolase III (230 aa).

This sequence belongs to the archaeal-type GTP cyclohydrolase family.

It catalyses the reaction GTP + 3 H2O = 2-amino-5-formylamino-6-(5-phospho-D-ribosylamino)pyrimidin-4(3H)-one + 2 phosphate + 2 H(+). Functionally, catalyzes the formation of 2-amino-5-formylamino-6-ribofuranosylamino-4(3H)-pyrimidinone ribonucleotide monophosphate and inorganic phosphate from GTP. Also has an independent pyrophosphate phosphohydrolase activity. This is GTP cyclohydrolase III from Saccharolobus islandicus (strain M.16.27) (Sulfolobus islandicus).